The primary structure comprises 155 residues: Ribosomal RNA large subunit methyltransferase H (155 aa).

S-adenosyl-L-methionine is bound by residues leucine 73, glycine 104, and 123–128 (LSPLTL).

It belongs to the RNA methyltransferase RlmH family. Homodimer.

Its subcellular location is the cytoplasm. The enzyme catalyses pseudouridine(1915) in 23S rRNA + S-adenosyl-L-methionine = N(3)-methylpseudouridine(1915) in 23S rRNA + S-adenosyl-L-homocysteine + H(+). Its function is as follows. Specifically methylates the pseudouridine at position 1915 (m3Psi1915) in 23S rRNA. The polypeptide is Ribosomal RNA large subunit methyltransferase H (Stutzerimonas stutzeri (strain A1501) (Pseudomonas stutzeri)).